Reading from the N-terminus, the 620-residue chain is Tyrosine-protein kinase ITK/TSK (620 aa).

The 108-residue stretch at 4–111 folds into the PH domain; it reads FILLEEQLIK…WVLALKEETR (108 aa). The segment at 113 to 149 adopts a Btk-type zinc-finger fold; that stretch reads NNSLVPKYHPNFWMDGKWRCCSQLEKLATGCAQYDPT. Zn(2+)-binding residues include His-121, Cys-132, Cys-133, and Cys-143. The 61-residue stretch at 171–231 folds into the SH3 domain; it reads PEETVVIALY…PSSYLVEKSP (61 aa). The residue at position 180 (Tyr-180) is a Phosphotyrosine; by autocatalysis. Residues 239–338 form the SH2 domain; sequence WYNKSISRDK…GLVTRLRYPV (100 aa). The Protein kinase domain maps to 363-615; the sequence is LTFVQEIGSG…SRLLRQLAEI (253 aa). ATP contacts are provided by residues 369–377 and Lys-391; that span reads IGSGQFGLV. The Proton acceptor role is filled by Asp-482. A Phosphotyrosine; by LCK modification is found at Tyr-512. Ser-565 bears the Phosphoserine mark.

Belongs to the protein kinase superfamily. Tyr protein kinase family. TEC subfamily. In terms of assembly, homooligomerizes; this association negatively regulates kinase activity. Interacts with PPIA/CYPA; this interaction regulates TCR signal strength via a proline-directed conformational switch in ITK. Interacts with THEMIS. Interacts with FASLG. Interacts with VAV1; this interaction is important for VAV1 localization and TCR-induced actin polarization. Interacts with TBX21. Zn(2+) serves as cofactor. In terms of processing, phosphorylated at Tyr-512 in the activation loop of the kinase domain by LCK. Subsequent autophosphorylation at Tyr-180 leads to the kinase activation. The autophosphorylated Tyr-180 lies within the substrate binding sequence of the SH3 domain. Post-translationally, ubiquitinated. In terms of tissue distribution, T-cell lines and natural killer cell lines.

Its subcellular location is the cytoplasm. The protein resides in the nucleus. It carries out the reaction L-tyrosyl-[protein] + ATP = O-phospho-L-tyrosyl-[protein] + ADP + H(+). Functionally, tyrosine kinase that plays an essential role in regulation of the adaptive immune response. Regulates the development, function and differentiation of conventional T-cells and nonconventional NKT-cells. When antigen presenting cells (APC) activate T-cell receptor (TCR), a series of phosphorylation lead to the recruitment of ITK to the cell membrane, in the vicinity of the stimulated TCR receptor, where it is phosphorylated by LCK. Phosphorylation leads to ITK autophosphorylation and full activation. Once activated, phosphorylates PLCG1, leading to the activation of this lipase and subsequent cleavage of its substrates. In turn, the endoplasmic reticulum releases calcium in the cytoplasm and the nuclear activator of activated T-cells (NFAT) translocates into the nucleus to perform its transcriptional duty. Phosphorylates 2 essential adapter proteins: the linker for activation of T-cells/LAT protein and LCP2. Then, a large number of signaling molecules such as VAV1 are recruited and ultimately lead to lymphokine production, T-cell proliferation and differentiation. Required for TCR-mediated calcium response in gamma-delta T-cells, may also be involved in the modulation of the transcriptomic signature in the Vgamma2-positive subset of immature gamma-delta T-cells. Phosphorylates TBX21 at 'Tyr-530' and mediates its interaction with GATA3. The sequence is that of Tyrosine-protein kinase ITK/TSK (ITK) from Homo sapiens (Human).